Consider the following 620-residue polypeptide: Chaperone protein HscA homolog (620 aa).

The protein belongs to the heat shock protein 70 family.

In terms of biological role, chaperone involved in the maturation of iron-sulfur cluster-containing proteins. Has a low intrinsic ATPase activity which is markedly stimulated by HscB. The protein is Chaperone protein HscA homolog of Shewanella baltica (strain OS195).